Reading from the N-terminus, the 324-residue chain is Adenosine kinase (324 aa).

Residues S8, D12, S36, G48, N52, F102, F116, and 172–173 (QQ) contribute to the substrate site. ATP-binding positions include N195, 223 to 228 (TLGPKG), and G256. Residue D257 participates in substrate binding. The active-site Proton acceptor is D257.

Belongs to the carbohydrate kinase PfkB family. Homodimer. The cofactor is Mg(2+).

It carries out the reaction adenosine + ATP = AMP + ADP + H(+). It catalyses the reaction adenosine + GTP = GDP + AMP + H(+). The enzyme catalyses dGTP + adenosine = dGDP + AMP + H(+). Its pathway is purine metabolism; AMP biosynthesis via salvage pathway; AMP from adenosine: step 1/1. Functionally, catalyzes the phosphorylation of adenosine to adenosine monophosphate (AMP). Prefers dGTP and GTP to ATP as phosphate donors in vitro. In Mycobacterium bovis (strain ATCC BAA-935 / AF2122/97), this protein is Adenosine kinase (adoK).